A 279-amino-acid polypeptide reads, in one-letter code: Cell division protein FtsQ (279 aa).

The disordered stretch occupies residues 1–28 (MTPMKKQLDKSLGSRRGATATRAKERAD). Residues 1 to 48 (MTPMKKQLDKSLGSRRGATATRAKERADNRNTGPAAIVRLLAFIPWNR) lie on the Cytoplasmic side of the membrane. The chain crosses the membrane as a helical span at residues 49–69 (VLLHVSIFCFWLLVLSALIAG). The Periplasmic portion of the chain corresponds to 70-279 (VKWLDRPVAT…WKADVTPEQG (210 aa)). The 70-residue stretch at 75–144 (RPVATVQVVG…DAVQVDLEEE (70 aa)) folds into the POTRA domain.

Belongs to the FtsQ/DivIB family. FtsQ subfamily. As to quaternary structure, part of a complex composed of FtsB, FtsL and FtsQ.

It localises to the cell inner membrane. Its function is as follows. Essential cell division protein. May link together the upstream cell division proteins, which are predominantly cytoplasmic, with the downstream cell division proteins, which are predominantly periplasmic. May control correct divisome assembly. The polypeptide is Cell division protein FtsQ (Hahella chejuensis (strain KCTC 2396)).